A 707-amino-acid chain; its full sequence is Transcription termination factor Rho (707 aa).

2 disordered regions span residues 1–38 and 76–321; these read MSDT…RRGT and QAAG…DEIQ. Low complexity-rich tracts occupy residues 16–31 and 76–93; these read AAAP…TGAG and QAAG…ADTA. Over residues 107 to 132 the composition is skewed to basic and acidic residues; it reads RTGDEAPAEKAEKAGKADKKADKAAA. Residues 153 to 163 show a composition bias toward low complexity; it reads ASAEQAAPADD. Polar residues predominate over residues 176 to 188; that stretch reads DAGSPSATDTTVA. The span at 203–213 shows a compositional bias: low complexity; it reads QQSQGHQQGQG. Residues 215-265 are compositionally biased toward basic and acidic residues; the sequence is ARSDAEGGDGRRRDRRDRGDRDRGDRGDRGDRGDRGDRGERGRDRRNKGDD. Basic residues predominate over residues 301-315; that stretch reads RRGRRGRYRDRRGRR. A Rho RNA-BD domain is found at 331-406; sequence LIPVAGILDI…VRLDSVNGMA (76 aa). ATP is bound by residues 449–454, 461–466, and Arg-492; these read GKGQRG and KTGKTM.

Belongs to the Rho family. In terms of assembly, homohexamer. The homohexamer assembles into an open ring structure.

Facilitates transcription termination by a mechanism that involves Rho binding to the nascent RNA, activation of Rho's RNA-dependent ATPase activity, and release of the mRNA from the DNA template. In Streptomyces lividans, this protein is Transcription termination factor Rho.